The chain runs to 430 residues: GTPase Obg (430 aa).

The 158-residue stretch at 1 to 158 folds into the Obg domain; the sequence is MFVDQVKISL…LDVSLELKLL (158 aa). A disordered region spans residues 118–145; it reads KGGRGGRGNSRFATPRNPAPDFSEKGEP. The 171-residue stretch at 159–329 folds into the OBG-type G domain; sequence ADVGLVGFPS…LLYAIADKLE (171 aa). GTP contacts are provided by residues 165–172, 190–194, 212–215, 282–285, and 310–312; these read GFPSVGKS, FTTIK, DLPG, NKMD, and STI. 2 residues coordinate Mg(2+): S172 and T192. In terms of domain architecture, OCT spans 352–430; that stretch reads KHTPSQDKFT…ILGGEFEFVE (79 aa).

It belongs to the TRAFAC class OBG-HflX-like GTPase superfamily. OBG GTPase family. As to quaternary structure, monomer. The cofactor is Mg(2+).

Its subcellular location is the cytoplasm. In terms of biological role, an essential GTPase which binds GTP, GDP and possibly (p)ppGpp with moderate affinity, with high nucleotide exchange rates and a fairly low GTP hydrolysis rate. Plays a role in control of the cell cycle, stress response, ribosome biogenesis and in those bacteria that undergo differentiation, in morphogenesis control. This chain is GTPase Obg, found in Staphylococcus aureus (strain bovine RF122 / ET3-1).